A 621-amino-acid chain; its full sequence is Acetolactate synthase (621 aa).

Low complexity predominate over residues 1–19 (MSAPTRRPAPDAPGAAGIA). The tract at residues 1 to 39 (MSAPTRRPAPDAPGAAGIAPAPPAPAAKPAAGKPKRIGP) is disordered. Glu-89 provides a ligand contact to thiamine diphosphate. FAD is bound by residues Arg-190, 296–317 (HGTVAAVAALQRSDLLIALGTR), and 339–358 (DIDPAEIGKNRHADVPIVGD). A thiamine pyrophosphate binding region spans residues 432 to 512 (HDQMWAAQFI…IKVALINNGN (81 aa)). The Mg(2+) site is built by Asp-483 and Asn-510.

It belongs to the TPP enzyme family. The cofactor is Mg(2+). Thiamine diphosphate is required as a cofactor.

It carries out the reaction 2 pyruvate + H(+) = (2S)-2-acetolactate + CO2. The protein operates within amino-acid biosynthesis; L-isoleucine biosynthesis; L-isoleucine from 2-oxobutanoate: step 1/4. It participates in amino-acid biosynthesis; L-valine biosynthesis; L-valine from pyruvate: step 1/4. The chain is Acetolactate synthase (ilvB) from Mycobacterium avium.